Consider the following 296-residue polypeptide: 4-diphosphocytidyl-2-C-methyl-D-erythritol kinase (296 aa).

Lys12 is a catalytic residue. Pro94–Ser104 serves as a coordination point for ATP. Residue Asp136 is part of the active site.

The protein belongs to the GHMP kinase family. IspE subfamily.

The catalysed reaction is 4-CDP-2-C-methyl-D-erythritol + ATP = 4-CDP-2-C-methyl-D-erythritol 2-phosphate + ADP + H(+). It participates in isoprenoid biosynthesis; isopentenyl diphosphate biosynthesis via DXP pathway; isopentenyl diphosphate from 1-deoxy-D-xylulose 5-phosphate: step 3/6. Functionally, catalyzes the phosphorylation of the position 2 hydroxy group of 4-diphosphocytidyl-2C-methyl-D-erythritol. This chain is 4-diphosphocytidyl-2-C-methyl-D-erythritol kinase, found in Variovorax paradoxus (strain S110).